The chain runs to 220 residues: Vesicle-associated membrane protein 7 (220 aa).

Ala-2 is modified (N-acetylalanine; partial). Over 2 to 188 (AILFAVVARG…ARAMCMKNLK (187 aa)) the chain is Cytoplasmic. In terms of domain architecture, Longin spans 7 to 110 (VVARGTTILA…AMNSEFSSVL (104 aa)). In terms of domain architecture, v-SNARE coiled-coil homology spans 125-185 (KVMETQAQVD…RNLARAMCMK (61 aa)). A phosphoserine mark is found at Ser-167 and Ser-168. A helical; Anchor for type IV membrane protein membrane pass occupies residues 189 to 209 (LTIIIIIVSIVFIYIIVSPLC). Topologically, residues 210–220 (GGFTWPSCVKK) are vesicular.

Belongs to the synaptobrevin family. As to quaternary structure, component of the SNARE complex composed of STX4, SNAP23 and VAMP7 that binds SYT7 during lysosomal exocytosis. Component of the SNARE complex composed of STX7, STX8, VAMP7 and VTI1B that is required for heterotypic fusion of late endosomes with lysosomes. May interact with STX17. Interacts with PICALM. Interacts with RAB21. In terms of tissue distribution, detected in all tissues tested.

The protein localises to the cytoplasmic vesicle. It is found in the secretory vesicle membrane. It localises to the golgi apparatus. Its subcellular location is the trans-Golgi network membrane. The protein resides in the late endosome membrane. The protein localises to the lysosome membrane. It is found in the endoplasmic reticulum membrane. It localises to the phagosome membrane. Its subcellular location is the synapse. The protein resides in the synaptosome. Involved in the targeting and/or fusion of transport vesicles to their target membrane during transport of proteins from the early endosome to the lysosome. Required for heterotypic fusion of late endosomes with lysosomes and homotypic lysosomal fusion. Required for calcium regulated lysosomal exocytosis. Involved in the export of chylomicrons from the endoplasmic reticulum to the cis Golgi. Required for exocytosis of mediators during eosinophil and neutrophil degranulation, and target cell killing by natural killer cells. Required for focal exocytosis of late endocytic vesicles during phagosome formation. This is Vesicle-associated membrane protein 7 (VAMP7) from Homo sapiens (Human).